A 256-amino-acid chain; its full sequence is 5'-nucleotidase SurE (256 aa).

Residues Asp-9, Asp-10, Ser-40, and Asn-94 each contribute to the a divalent metal cation site.

The protein belongs to the SurE nucleotidase family. A divalent metal cation serves as cofactor.

The protein resides in the cytoplasm. The enzyme catalyses a ribonucleoside 5'-phosphate + H2O = a ribonucleoside + phosphate. Nucleotidase that shows phosphatase activity on nucleoside 5'-monophosphates. The polypeptide is 5'-nucleotidase SurE (Campylobacter fetus subsp. fetus (strain 82-40)).